We begin with the raw amino-acid sequence, 446 residues long: Zinc finger protein BALDIBIS (446 aa).

Residues 20–53 (EHIAPNPNPNPNPTSSNSAKRKRNLPGNPDPDAE) form a disordered region. S58 carries the post-translational modification Phosphoserine. 2 C2H2-type zinc fingers span residues 68-90 (FICE…RRGH) and 110-140 (YICP…SRKH). The short motif at 132 to 139 (IKKHFSRK) is the Nuclear localization signal element. A C2H2-type 2; degenerate zinc finger spans residues 145-168 (WKCDKCSKKYAVMSDWKAHSKICG). C147, C150, H163, C167, C174, C176, H189, and C193 together coordinate Zn(2+). Residues 172 to 195 (YRCDCGTLFSRKDSFITHRAFCDA) form a CCHC-type 2; atypical zinc finger. The interval 182-194 (RKDSFITHRAFCD) is SHR-binding. Residues 425–446 (HNLPDSSPPASTDGTPTADMNQ) form a disordered region. Residues 427 to 446 (LPDSSPPASTDGTPTADMNQ) are compositionally biased toward polar residues.

In terms of assembly, binds to RGA and SCL3 competitively in the nucleus. In terms of tissue distribution, expressed in roots, especially in vascular initials, cortex, endodermis, and quiescent center (QC).

The protein resides in the nucleus. In terms of biological role, transcription factor that, together with JKD, regulates tissue boundaries and asymmetric cell division in roots by a rapid up-regulation of 'SCARECROW' (SCR), thus controlling the nuclear localization of 'SHORT-ROOT' (SHR) and restricting its action. Confines CYCD6 expression to the cortex-endodermis initial/daughter (CEI/CEID) tissues. Binds DNA via its zinc fingers. Recognizes and binds to SCL3 promoter sequence 5'-AGACAA-3' to promote its expression when in complex with RGA. This Arabidopsis thaliana (Mouse-ear cress) protein is Zinc finger protein BALDIBIS.